We begin with the raw amino-acid sequence, 437 residues long: Epsilon-sarcoglycan (437 aa).

Residues 1–317 (MLLFWWWELG…LKSRDYYTDF (317 aa)) are Extracellular-facing. Asn200 is a glycosylation site (N-linked (GlcNAc...) asparagine). The helical transmembrane segment at 318-338 (LVTLAVPSAVALVLFLILAYI) threads the bilayer. The Cytoplasmic segment spans residues 339–437 (MCCRREGVEK…QPQTTGKWYP (99 aa)).

It belongs to the sarcoglycan alpha/epsilon family. In terms of processing, N-glycosylated. Post-translationally, ubiquitinated, leading to its degradation by the proteasome. Identified in all tissues tested. Expression highest in lung and placenta, moderate in brain, heart and skeletal muscle, low in kidney and liver. Also detected in embryo.

It localises to the cell membrane. The protein localises to the sarcolemma. The protein resides in the golgi apparatus. Its subcellular location is the cell projection. It is found in the dendrite. It localises to the cytoplasm. The protein localises to the cytoskeleton. Its function is as follows. Component of the sarcoglycan complex, a subcomplex of the dystrophin-glycoprotein complex which forms a link between the F-actin cytoskeleton and the extracellular matrix. This is Epsilon-sarcoglycan (Sgce) from Mus musculus (Mouse).